The chain runs to 148 residues: UPF0179 protein Mpal_0949 (148 aa).

Belongs to the UPF0179 family.

This is UPF0179 protein Mpal_0949 from Methanosphaerula palustris (strain ATCC BAA-1556 / DSM 19958 / E1-9c).